The chain runs to 43 residues: ORF7b protein (43 aa).

Residues 9 to 29 (FYLCFLAFLLFLVLIMLIIFW) traverse the membrane as a helical segment.

It is found in the host Golgi apparatus membrane. The protein resides in the host endosome membrane. The chain is ORF7b protein from Homo sapiens (Human).